The chain runs to 105 residues: Nucleoid-associated protein SaurJH1_0513 (105 aa).

A disordered region spans residues M1 to I33. The span at M7–K16 shows a compositional bias: low complexity. Residues M21–I33 show a composition bias toward basic and acidic residues.

Belongs to the YbaB/EbfC family. In terms of assembly, homodimer.

It localises to the cytoplasm. It is found in the nucleoid. In terms of biological role, binds to DNA and alters its conformation. May be involved in regulation of gene expression, nucleoid organization and DNA protection. This Staphylococcus aureus (strain JH1) protein is Nucleoid-associated protein SaurJH1_0513.